We begin with the raw amino-acid sequence, 98 residues long: UPF0235 protein Mmc1_3654 (98 aa).

It belongs to the UPF0235 family.

This Magnetococcus marinus (strain ATCC BAA-1437 / JCM 17883 / MC-1) protein is UPF0235 protein Mmc1_3654.